Here is a 660-residue protein sequence, read N- to C-terminus: Macrolide export ATP-binding/permease protein MacB (660 aa).

One can recognise an ABC transporter domain in the interval 10 to 248; that stretch reads LVLENIVRKF…AKGQALQGKQ (239 aa). 46–53 contributes to the ATP binding site; the sequence is GASGSGKS. A run of 4 helical transmembrane segments spans residues 285-305, 532-552, 593-613, and 625-645; these read FLTM…VALG, ILTL…GIGV, IIGG…FVLF, and SIII…FSPA.

The protein belongs to the ABC transporter superfamily. Macrolide exporter (TC 3.A.1.122) family. In terms of assembly, homodimer.

The protein resides in the cell inner membrane. Non-canonical ABC transporter that contains transmembrane domains (TMD), which form a pore in the inner membrane, and an ATP-binding domain (NBD), which is responsible for energy generation. Confers resistance against macrolides. This is Macrolide export ATP-binding/permease protein MacB from Bartonella quintana (strain Toulouse) (Rochalimaea quintana).